The following is a 190-amino-acid chain: uncharacterized protein (190 aa).

Helical transmembrane passes span 15-35 (LVMS…VLAI), 58-78 (FSSF…GVLI), 94-114 (FFSA…YFAF), and 148-168 (FLFF…SFFV).

Its subcellular location is the membrane. This is an uncharacterized protein from Saccharomyces cerevisiae (strain ATCC 204508 / S288c) (Baker's yeast).